Here is a 116-residue protein sequence, read N- to C-terminus: Insulin (116 aa).

The first 24 residues, 1-24 (MAALWLQSFSLLVLLVVSWPGSQA), serve as a signal peptide directing secretion. 3 cysteine pairs are disulfide-bonded: C32-C102, C44-C115, and C101-C106. Positions 56–93 (DVDQLLGFLPPKSGGAAAAGADNEVAEFAFKDQMEMMV) are cleaved as a propeptide — c peptide.

Belongs to the insulin family. In terms of assembly, heterodimer of a B chain and an A chain linked by two disulfide bonds.

The protein localises to the secreted. Functionally, insulin decreases blood glucose concentration. It increases cell permeability to monosaccharides, amino acids and fatty acids. It accelerates glycolysis, the pentose phosphate cycle, and glycogen synthesis in liver. This Lophius americanus (American angler) protein is Insulin (ins).